The sequence spans 404 residues: Deoxyguanosinetriphosphate triphosphohydrolase-like protein 1 (404 aa).

The HD domain maps to 75–219; it reads RLTHSIEVAQ…AAIADDIAYN (145 aa).

The protein belongs to the dGTPase family. Type 2 subfamily.

This Mesorhizobium japonicum (strain LMG 29417 / CECT 9101 / MAFF 303099) (Mesorhizobium loti (strain MAFF 303099)) protein is Deoxyguanosinetriphosphate triphosphohydrolase-like protein 1.